The chain runs to 252 residues: Hydroxyacylglutathione hydrolase (252 aa).

Zn(2+) is bound by residues His-54, His-56, Asp-58, His-59, His-111, Asp-130, and His-170.

The protein belongs to the metallo-beta-lactamase superfamily. Glyoxalase II family. Monomer. Zn(2+) serves as cofactor.

The catalysed reaction is an S-(2-hydroxyacyl)glutathione + H2O = a 2-hydroxy carboxylate + glutathione + H(+). It functions in the pathway secondary metabolite metabolism; methylglyoxal degradation; (R)-lactate from methylglyoxal: step 2/2. Functionally, thiolesterase that catalyzes the hydrolysis of S-D-lactoyl-glutathione to form glutathione and D-lactic acid. This Francisella tularensis subsp. novicida (strain U112) protein is Hydroxyacylglutathione hydrolase.